Consider the following 223-residue polypeptide: DNA mismatch repair protein MutH (223 aa).

The protein belongs to the MutH family.

It localises to the cytoplasm. In terms of biological role, sequence-specific endonuclease that cleaves unmethylated GATC sequences. It is involved in DNA mismatch repair. The protein is DNA mismatch repair protein MutH of Shewanella baltica (strain OS185).